The sequence spans 425 residues: Adenylosuccinate synthetase (425 aa).

GTP contacts are provided by residues 12-18 (GDEGKGK) and 40-42 (GHT). Catalysis depends on aspartate 13, which acts as the Proton acceptor. 2 residues coordinate Mg(2+): aspartate 13 and glycine 40. IMP contacts are provided by residues 13-16 (DEGK), 38-41 (NAGH), threonine 127, arginine 141, glutamine 222, threonine 237, and arginine 301. Histidine 41 acts as the Proton donor in catalysis. Residue 297 to 303 (AVTGRPR) coordinates substrate. GTP contacts are provided by residues arginine 303, 329-331 (KID), and 411-413 (SVG).

Belongs to the adenylosuccinate synthetase family. As to quaternary structure, homodimer. It depends on Mg(2+) as a cofactor.

The protein resides in the cytoplasm. It carries out the reaction IMP + L-aspartate + GTP = N(6)-(1,2-dicarboxyethyl)-AMP + GDP + phosphate + 2 H(+). It participates in purine metabolism; AMP biosynthesis via de novo pathway; AMP from IMP: step 1/2. Its function is as follows. Plays an important role in the de novo pathway of purine nucleotide biosynthesis. Catalyzes the first committed step in the biosynthesis of AMP from IMP. The sequence is that of Adenylosuccinate synthetase from Fusobacterium nucleatum subsp. nucleatum (strain ATCC 25586 / DSM 15643 / BCRC 10681 / CIP 101130 / JCM 8532 / KCTC 2640 / LMG 13131 / VPI 4355).